The chain runs to 483 residues: MTKTEINKKDWEINVVVSSEKKLWKAKQDLALSNLAKTLKIKGFRPGKASVEAAKKHLNPEQIQEEAVKLIANDLVKIASESIDESYIVLDSPIYEVEKMSDAELDLKFSYPIYPEFKIKNYKSLKVTLSRAKVSKEDVDSEIEKIREKNALLIKKTKDQGKVAKTDTVNIDYVGKIDGEEFDGGKASSHELVIGSKSFIDNFEDQLIGFKSGDKVEVKVSFPDDYHSSKFAGKKAIFDVKINDVFTKEKPVKNDDLVKFLNNPKLKTLAEMENYFKDLIKNEKDEKSKASFKKDIFEKIMNENEIPVPRLILMKETTNAIREFEKDVKKYGFTVEKYLKMLNMNSKDFVTNLNKESELKLKEALIYTEISKLEKIEAQPEDYDVKYKKFAKLYNVSLDSVKSMITQQQAQVAIVNEKILEFLIKHNAIEKNSVGEEPKLSTTKKVVEPTEEKTRKDSKMSTKKPAAKPAAKPAAATKKPVKK.

A PPIase FKBP-type domain is found at 166–251 (TDTVNIDYVG…INDVFTKEKP (86 aa)). The span at 435 to 460 (GEEPKLSTTKKVVEPTEEKTRKDSKM) shows a compositional bias: basic and acidic residues. Residues 435–483 (GEEPKLSTTKKVVEPTEEKTRKDSKMSTKKPAAKPAAKPAAATKKPVKK) form a disordered region. Over residues 467-483 (AKPAAKPAAATKKPVKK) the composition is skewed to low complexity.

The protein belongs to the FKBP-type PPIase family. Tig subfamily.

The protein localises to the cytoplasm. The catalysed reaction is [protein]-peptidylproline (omega=180) = [protein]-peptidylproline (omega=0). Involved in protein export. Acts as a chaperone by maintaining the newly synthesized protein in an open conformation. Functions as a peptidyl-prolyl cis-trans isomerase. In Mycoplasma mobile (strain ATCC 43663 / 163K / NCTC 11711) (Mesomycoplasma mobile), this protein is Trigger factor.